Consider the following 628-residue polypeptide: 69 kDa protein (628 aa).

Disordered stretches follow at residues 1–24 (MSNG…LSAS), 141–492 (HFHA…SDPV), and 537–628 (VLPT…PDTD). Composition is skewed to polar residues over residues 166–178 (RTSV…TTRG) and 295–305 (TGHIPSTTASR). Pro residues predominate over residues 433–451 (EGPPPPPRRLPSPATPPQS). Residues 586-596 (PSGPLRSQSPS) are compositionally biased toward polar residues.

It belongs to the tymoviridae protein p69 family.

In terms of biological role, acts as a suppressor of RNA-mediated gene silencing, also known as post-transcriptional gene silencing (PTGS), a mechanism of plant viral defense that limits the accumulation of viral RNAs. In Turnip yellow mosaic virus (isolate Australia), this protein is 69 kDa protein.